A 692-amino-acid chain; its full sequence is Penicillin-binding protein activator LpoA (692 aa).

The first 26 residues, 1–26 (MLSSITVRTKSGRLIPLVLAATLLAA), serve as a signal peptide directing secretion. Residue Cys27 is the site of N-palmitoyl cysteine attachment. Residue Cys27 is the site of S-diacylglycerol cysteine attachment. Disordered stretches follow at residues 297 to 316 (AAAATDNGAPASSGTLAAAT) and 324 to 373 (VNAA…PDAH). Residues 332 to 363 (PSAQGTDAAAPAAPNDSAALPPLDAAGDPIAP) show a composition bias toward low complexity.

This sequence belongs to the LpoA family. Interacts with PBP1a.

The protein resides in the cell outer membrane. In terms of biological role, regulator of peptidoglycan synthesis that is essential for the function of penicillin-binding protein 1A (PBP1a). The polypeptide is Penicillin-binding protein activator LpoA (Edwardsiella piscicida).